The sequence spans 93 residues: Small ribosomal subunit protein uS19 (93 aa).

This sequence belongs to the universal ribosomal protein uS19 family.

In terms of biological role, protein S19 forms a complex with S13 that binds strongly to the 16S ribosomal RNA. This chain is Small ribosomal subunit protein uS19, found in Oleidesulfovibrio alaskensis (strain ATCC BAA-1058 / DSM 17464 / G20) (Desulfovibrio alaskensis).